The primary structure comprises 131 residues: Arsenate reductase 2 (131 aa).

Active-site nucleophile residues include C10, C82, and C89. Intrachain disulfides connect C10/C82 and C82/C89.

Belongs to the low molecular weight phosphotyrosine protein phosphatase family. Thioredoxin-coupled ArsC subfamily.

It localises to the cytoplasm. It catalyses the reaction arsenate + [thioredoxin]-dithiol + H(+) = arsenite + [thioredoxin]-disulfide + H2O. In terms of biological role, catalyzes the reduction of arsenate [As(V)] to arsenite [As(III)]. The sequence is that of Arsenate reductase 2 from Staphylococcus epidermidis (strain ATCC 35984 / DSM 28319 / BCRC 17069 / CCUG 31568 / BM 3577 / RP62A).